The chain runs to 462 residues: Polygalacturonase (462 aa).

Positions 1–22 are cleaved as a signal peptide; the sequence is MALTRLLLPISILWFCFYSSHT. N173 carries an N-linked (GlcNAc...) asparagine glycan. The active-site Proton donor is the D278. A disulfide bond links C280 and C297. The N-linked (GlcNAc...) asparagine glycan is linked to N294. Residue H301 is part of the active site. N358 is a glycosylation site (N-linked (GlcNAc...) asparagine). Disulfide bonds link C407/C413 and C435/C460.

Belongs to the glycosyl hydrolase 28 family.

The protein localises to the secreted. The protein resides in the cell wall. The catalysed reaction is (1,4-alpha-D-galacturonosyl)n+m + H2O = (1,4-alpha-D-galacturonosyl)n + (1,4-alpha-D-galacturonosyl)m.. In terms of biological role, acts in concert with the pectinesterase, in the ripening process. Is involved in cell wall metabolism, specifically in polyuronide degradation. The protein is Polygalacturonase of Persea americana (Avocado).